A 378-amino-acid chain; its full sequence is Enoyl-[acyl-carrier-protein] reductase 1, mitochondrial (378 aa).

The active-site Proton donor is the Tyr-59. NADP(+) is bound by residues Asn-151, 180–183 (NSQV), 203–206 (RDGK), 284–287 (YGGM), 309–311 (YWL), and Lys-372.

The protein belongs to the zinc-containing alcohol dehydrogenase family. Quinone oxidoreductase subfamily. As to quaternary structure, homodimer.

Its subcellular location is the mitochondrion matrix. It carries out the reaction a 2,3-saturated acyl-[ACP] + NADP(+) = a (2E)-enoyl-[ACP] + NADPH + H(+). In terms of biological role, catalyzes the NADPH-dependent reduction of trans-2-enoyl thioesters in mitochondrial fatty acid synthesis (fatty acid synthesis type II). Fatty acid chain elongation in mitochondria uses acyl carrier protein (ACP) as an acyl group carrier, but the enzyme accepts both ACP and CoA thioesters as substrates in vitro. Required for respiration and the maintenance of the mitochondrial compartment. The sequence is that of Enoyl-[acyl-carrier-protein] reductase 1, mitochondrial (ETR1) from Debaryomyces hansenii (strain ATCC 36239 / CBS 767 / BCRC 21394 / JCM 1990 / NBRC 0083 / IGC 2968) (Yeast).